Consider the following 139-residue polypeptide: Large ribosomal subunit protein uL16 (139 aa).

The segment covering 1–20 (MLIPRRVKHRKQHHPKRRGQ) has biased composition (basic residues). Residues 1–25 (MLIPRRVKHRKQHHPKRRGQAKGGT) form a disordered region.

This sequence belongs to the universal ribosomal protein uL16 family. Part of the 50S ribosomal subunit.

Its function is as follows. Binds 23S rRNA and is also seen to make contacts with the A and possibly P site tRNAs. The polypeptide is Large ribosomal subunit protein uL16 (Streptomyces avermitilis (strain ATCC 31267 / DSM 46492 / JCM 5070 / NBRC 14893 / NCIMB 12804 / NRRL 8165 / MA-4680)).